A 160-amino-acid chain; its full sequence is 2-C-methyl-D-erythritol 2,4-cyclodiphosphate synthase (160 aa).

Residues Asp-9 and His-11 each coordinate a divalent metal cation. 4-CDP-2-C-methyl-D-erythritol 2-phosphate contacts are provided by residues Asp-9–His-11 and His-35–Ser-36. His-43 serves as a coordination point for a divalent metal cation. 4-CDP-2-C-methyl-D-erythritol 2-phosphate contacts are provided by residues Asp-57–Gly-59, Phe-62–Asp-66, and Phe-140.

Belongs to the IspF family. As to quaternary structure, homotrimer. A divalent metal cation is required as a cofactor.

It catalyses the reaction 4-CDP-2-C-methyl-D-erythritol 2-phosphate = 2-C-methyl-D-erythritol 2,4-cyclic diphosphate + CMP. Its pathway is isoprenoid biosynthesis; isopentenyl diphosphate biosynthesis via DXP pathway; isopentenyl diphosphate from 1-deoxy-D-xylulose 5-phosphate: step 4/6. Functionally, involved in the biosynthesis of isopentenyl diphosphate (IPP) and dimethylallyl diphosphate (DMAPP), two major building blocks of isoprenoid compounds. Catalyzes the conversion of 4-diphosphocytidyl-2-C-methyl-D-erythritol 2-phosphate (CDP-ME2P) to 2-C-methyl-D-erythritol 2,4-cyclodiphosphate (ME-CPP) with a corresponding release of cytidine 5-monophosphate (CMP). The sequence is that of 2-C-methyl-D-erythritol 2,4-cyclodiphosphate synthase from Fusobacterium nucleatum subsp. nucleatum (strain ATCC 25586 / DSM 15643 / BCRC 10681 / CIP 101130 / JCM 8532 / KCTC 2640 / LMG 13131 / VPI 4355).